We begin with the raw amino-acid sequence, 505 residues long: Flagellin (505 aa).

Belongs to the bacterial flagellin family.

Its subcellular location is the secreted. It localises to the bacterial flagellum. Flagellin is the subunit protein which polymerizes to form the filaments of bacterial flagella. The protein is Flagellin (fliC) of Salmonella rostock.